The chain runs to 599 residues: Sulfite reductase [NADPH] flavoprotein alpha-component (599 aa).

In terms of domain architecture, Flavodoxin-like spans 64–202 (ITIISASQTG…AASEWRARVV (139 aa)). FMN contacts are provided by residues 70-75 (SQTGNA), 117-120 (STQG), and 153-162 (LGDSSYEFFC). Positions 234-448 (DAPLAASLSV…IEHNDNFRLP (215 aa)) constitute an FAD-binding FR-type domain. FAD is bound by residues Thr322, Ala356, 386 to 389 (RLYS), 404 to 406 (TVG), Tyr410, and 419 to 422 (GGAS). NADP(+) contacts are provided by residues 519–520 (SR), 525–529 (KIYVQ), and Asp561. Tyr599 lines the FAD pocket.

This sequence belongs to the NADPH-dependent sulphite reductase flavoprotein subunit CysJ family. In the N-terminal section; belongs to the flavodoxin family. The protein in the C-terminal section; belongs to the flavoprotein pyridine nucleotide cytochrome reductase family. As to quaternary structure, alpha(8)-beta(8). The alpha component is a flavoprotein, the beta component is a hemoprotein. Requires FAD as cofactor. The cofactor is FMN.

It catalyses the reaction hydrogen sulfide + 3 NADP(+) + 3 H2O = sulfite + 3 NADPH + 4 H(+). The protein operates within sulfur metabolism; hydrogen sulfide biosynthesis; hydrogen sulfide from sulfite (NADPH route): step 1/1. In terms of biological role, component of the sulfite reductase complex that catalyzes the 6-electron reduction of sulfite to sulfide. This is one of several activities required for the biosynthesis of L-cysteine from sulfate. The flavoprotein component catalyzes the electron flow from NADPH -&gt; FAD -&gt; FMN to the hemoprotein component. In Escherichia coli O6:H1 (strain CFT073 / ATCC 700928 / UPEC), this protein is Sulfite reductase [NADPH] flavoprotein alpha-component.